We begin with the raw amino-acid sequence, 700 residues long: Elongation factor G (700 aa).

Residues 10–286 (TKVRNIGIMA…AVIDYLPSPL (277 aa)) form the tr-type G domain. GTP is bound by residues 19-26 (AHIDAGKT), 83-87 (DTPGH), and 137-140 (NKMD).

Belongs to the TRAFAC class translation factor GTPase superfamily. Classic translation factor GTPase family. EF-G/EF-2 subfamily.

The protein localises to the cytoplasm. Functionally, catalyzes the GTP-dependent ribosomal translocation step during translation elongation. During this step, the ribosome changes from the pre-translocational (PRE) to the post-translocational (POST) state as the newly formed A-site-bound peptidyl-tRNA and P-site-bound deacylated tRNA move to the P and E sites, respectively. Catalyzes the coordinated movement of the two tRNA molecules, the mRNA and conformational changes in the ribosome. The polypeptide is Elongation factor G (Kineococcus radiotolerans (strain ATCC BAA-149 / DSM 14245 / SRS30216)).